A 139-amino-acid chain; its full sequence is Small ribosomal subunit protein uS11 (139 aa).

This sequence belongs to the universal ribosomal protein uS11 family. Part of the 30S ribosomal subunit.

Located on the platform of the 30S subunit. The polypeptide is Small ribosomal subunit protein uS11 (Pyrobaculum islandicum (strain DSM 4184 / JCM 9189 / GEO3)).